Consider the following 134-residue polypeptide: Protein PsiB (134 aa).

Its function is as follows. Could be involved directly or indirectly in exopolysaccharide synthesis. The sequence is that of Protein PsiB (psiB) from Rhizobium leguminosarum bv. phaseoli.